The chain runs to 465 residues: Ribulose bisphosphate carboxylase large chain (465 aa).

Lys4 carries the post-translational modification N6,N6,N6-trimethyllysine. Thr163 contacts substrate. Lys165 serves as the catalytic Proton acceptor. Lys167 serves as a coordination point for substrate. Positions 191, 193, and 194 each coordinate Mg(2+). N6-carboxylysine is present on Lys191. Residue His284 is the Proton acceptor of the active site. Substrate-binding residues include Arg285, His317, and Ser369.

This sequence belongs to the RuBisCO large chain family. Type I subfamily. As to quaternary structure, heterohexadecamer of 8 large chains and 8 small chains; disulfide-linked. The disulfide link is formed within the large subunit homodimers. Mg(2+) is required as a cofactor. Post-translationally, the disulfide bond which can form in the large chain dimeric partners within the hexadecamer appears to be associated with oxidative stress and protein turnover.

The protein resides in the plastid. The protein localises to the chloroplast. The catalysed reaction is 2 (2R)-3-phosphoglycerate + 2 H(+) = D-ribulose 1,5-bisphosphate + CO2 + H2O. The enzyme catalyses D-ribulose 1,5-bisphosphate + O2 = 2-phosphoglycolate + (2R)-3-phosphoglycerate + 2 H(+). In terms of biological role, ruBisCO catalyzes two reactions: the carboxylation of D-ribulose 1,5-bisphosphate, the primary event in carbon dioxide fixation, as well as the oxidative fragmentation of the pentose substrate in the photorespiration process. Both reactions occur simultaneously and in competition at the same active site. The protein is Ribulose bisphosphate carboxylase large chain of Trochodendron aralioides (Wheel tree).